A 201-amino-acid chain; its full sequence is Two-component response regulator ORR10 (201 aa).

One can recognise a Response regulatory domain in the interval 10-142 (HVLAVDDSLP…DMSKLKPHIL (133 aa)). Position 75 is a 4-aspartylphosphate (aspartate 75). Residues 149–201 (HYQQEQHLQSNSESNNSSNPTSENSSSSTSTNSHKRKAVDEEILPHTIRPRHS) form a disordered region. Residues 158-180 (SNSESNNSSNPTSENSSSSTSTN) show a composition bias toward low complexity.

Belongs to the ARR family. Type-A subfamily. Post-translationally, two-component system major event consists of a His-to-Asp phosphorelay between a sensor histidine kinase (HK) and a response regulator (RR). In plants, the His-to-Asp phosphorelay involves an additional intermediate named Histidine-containing phosphotransfer protein (HPt). This multistep phosphorelay consists of a His-Asp-His-Asp sequential transfer of a phosphate group between first a His and an Asp of the HK protein, followed by the transfer to a conserved His of the HPt protein and finally the transfer to an Asp in the receiver domain of the RR protein. In terms of tissue distribution, expressed in mature leaves, and at low levels in roots, shoots and flowers.

In terms of biological role, functions as a response regulator involved in His-to-Asp phosphorelay signal transduction system. Phosphorylation of the Asp residue in the receiver domain activates the ability of the protein to promote the transcription of target genes. Type-A response regulators seem to act as negative regulators of the cytokinin signaling. The protein is Two-component response regulator ORR10 of Oryza sativa subsp. indica (Rice).